A 307-amino-acid polypeptide reads, in one-letter code: 3-ketodihydrosphingosine reductase TSC10 (307 aa).

Leu11 provides a ligand contact to NADP(+). NADPH is bound by residues Gly14, Ser16, and Gly18. The short motif at 14-18 is the GXSXG element; that stretch reads GGSQG. Leu19 lines the NADP(+) pocket. NADPH is bound by residues Arg40, Lys44, and Leu74. Residue Ser147 is the Proton donor of the active site. Tyr161, Lys165, and Ser194 together coordinate NADP(+). Tyr161 serves as the catalytic Proton acceptor. The active-site Lowers pKa of active site Tyr is the Lys165. The helical transmembrane segment at 261 to 281 threads the bilayer; it reads YFLWPLGWLLGALVNLLVVPI.

This sequence belongs to the short-chain dehydrogenases/reductases (SDR) family.

Its subcellular location is the endoplasmic reticulum membrane. The catalysed reaction is sphinganine + NADP(+) = 3-oxosphinganine + NADPH + H(+). It functions in the pathway lipid metabolism; sphingolipid metabolism. In terms of biological role, catalyzes the reduction of 3'-oxosphinganine (3-ketodihydrosphingosine/KDS) to sphinganine (dihydrosphingosine/DHS), the second step of de novo sphingolipid biosynthesis. This is 3-ketodihydrosphingosine reductase TSC10 (TSC10) from Eremothecium gossypii (strain ATCC 10895 / CBS 109.51 / FGSC 9923 / NRRL Y-1056) (Yeast).